Here is a 906-residue protein sequence, read N- to C-terminus: Ribonucleoside-diphosphate reductase large subunit-like protein (906 aa).

Disordered regions lie at residues methionine 1–threonine 70 and valine 89–phenylalanine 129. The span at proline 98 to arginine 109 shows a compositional bias: polar residues.

It belongs to the ribonucleoside diphosphate reductase large chain family.

Its subcellular location is the virion. The protein localises to the host cytoplasm. Functionally, does not possess a ribonucleotide reductase activity. Betaherpesviruses probably use another strategy to expand the dNTP pool in a quiescent host cell. The sequence is that of Ribonucleoside-diphosphate reductase large subunit-like protein from Homo sapiens (Human).